We begin with the raw amino-acid sequence, 273 residues long: Putative phosphoenolpyruvate synthase regulatory protein (273 aa).

Residue 153 to 160 (AVSRAGKT) coordinates ADP.

It belongs to the pyruvate, phosphate/water dikinase regulatory protein family. PSRP subfamily.

The enzyme catalyses [pyruvate, water dikinase] + ADP = [pyruvate, water dikinase]-phosphate + AMP + H(+). It carries out the reaction [pyruvate, water dikinase]-phosphate + phosphate + H(+) = [pyruvate, water dikinase] + diphosphate. Bifunctional serine/threonine kinase and phosphorylase involved in the regulation of the phosphoenolpyruvate synthase (PEPS) by catalyzing its phosphorylation/dephosphorylation. In Xanthomonas campestris pv. campestris (strain 8004), this protein is Putative phosphoenolpyruvate synthase regulatory protein.